Reading from the N-terminus, the 684-residue chain is Actin-related protein 5 (684 aa).

Residues 262 to 469 (KEKSVIIQLP…ARQKQKQKAN (208 aa)) adopt a coiled-coil conformation. Disordered stretches follow at residues 392–443 (KEKK…PEHY) and 481–500 (VNPT…EDPE). Residues 402 to 443 (SMKDGRLAQKRKRDEEKEKEKEKEEERDRQEEESFLKDPEHY) are compositionally biased toward basic and acidic residues.

Belongs to the actin family. ARP5 subfamily. As to quaternary structure, component of the chromatin-remodeling Ino80 complex.

It is found in the nucleus. Functionally, proposed core component of the chromatin remodeling Ino80 complex which is involved in transcriptional regulation, DNA replication and probably DNA repair. This Dictyostelium discoideum (Social amoeba) protein is Actin-related protein 5 (arpE).